The primary structure comprises 293 residues: Movement protein BC1 (293 aa).

The protein belongs to the begomovirus movement protein BC1 family. Binds to dimeric supercoiled plasmid DNA. Post-translationally, phosphorylated.

Its subcellular location is the host cell membrane. It is found in the host microsome membrane. The protein localises to the host endoplasmic reticulum membrane. Functionally, transports viral genome to neighboring plant cells directly through plasmosdesmata, without any budding. The movement protein allows efficient cell to cell propagation, by bypassing the host cell wall barrier. Begomovirus genome is shuttled out of nucleus by Nuclear shuttle protein (NSP) and the movement protein transports the DNA-NSP complex to cell plasmodesmata and facilitates further movement across the cell wall. This chain is Movement protein BC1, found in Potato yellow mosaic virus (isolate Venezuela) (PYMV).